A 510-amino-acid chain; its full sequence is ATP synthase subunit alpha (510 aa).

An ATP-binding site is contributed by 169 to 176; the sequence is GDRQTGKT.

It belongs to the ATPase alpha/beta chains family. In terms of assembly, F-type ATPases have 2 components, CF(1) - the catalytic core - and CF(0) - the membrane proton channel. CF(1) has five subunits: alpha(3), beta(3), gamma(1), delta(1), epsilon(1). CF(0) has four main subunits: a(1), b(1), b'(1) and c(9-12).

It localises to the cell inner membrane. It carries out the reaction ATP + H2O + 4 H(+)(in) = ADP + phosphate + 5 H(+)(out). Produces ATP from ADP in the presence of a proton gradient across the membrane. The alpha chain is a regulatory subunit. In Rhodopseudomonas palustris (strain HaA2), this protein is ATP synthase subunit alpha.